The chain runs to 524 residues: Cytochrome P450 4F1 (524 aa).

The helical transmembrane segment at 15–35 (VAFPWQTLLLFGASWILAQIL) threads the bilayer. The heme site is built by glutamate 328 and cysteine 468.

Belongs to the cytochrome P450 family. It depends on heme as a cofactor. In terms of tissue distribution, expressed in liver.

It localises to the endoplasmic reticulum membrane. The protein resides in the microsome membrane. The enzyme catalyses (5Z,8Z,11Z,14Z)-eicosatetraenoate + reduced [NADPH--hemoprotein reductase] + O2 = 20-hydroxy-(5Z,8Z,11Z,14Z)-eicosatetraenoate + oxidized [NADPH--hemoprotein reductase] + H2O + H(+). It catalyses the reaction 5-hydroxy-(6E,8Z,11Z,14Z)-eicosatetraenoate + reduced [NADPH--hemoprotein reductase] + O2 = 5,20-dihydroxy-(6E,8Z,11Z,14Z)-eicosatetraenoate + oxidized [NADPH--hemoprotein reductase] + H2O + H(+). It carries out the reaction 8-hydroxy-(5Z,9E,11Z,14Z)-eicosatetraenoate + reduced [NADPH--hemoprotein reductase] + O2 = 8,20-dihydroxy-(5Z,9E,11Z,14Z)-eicosatetraenoate + oxidized [NADPH--hemoprotein reductase] + H2O + H(+). The catalysed reaction is leukotriene B4 + reduced [NADPH--hemoprotein reductase] + O2 = 20-hydroxy-leukotriene B4 + oxidized [NADPH--hemoprotein reductase] + H2O + H(+). The enzyme catalyses 6-trans-leukotriene B4 + reduced [NADPH--hemoprotein reductase] + O2 = 20-hydroxy-6-trans-leukotriene B4 + oxidized [NADPH--hemoprotein reductase] + H2O + H(+). It catalyses the reaction lipoxin A4 + reduced [NADPH--hemoprotein reductase] + O2 = 20-hydroxy-lipoxin A4 + oxidized [NADPH--hemoprotein reductase] + H2O + H(+). In terms of biological role, a cytochrome P450 monooxygenase involved in the metabolism of arachidonic acid and its oxygenated derivatives. Mechanistically, uses molecular oxygen inserting one oxygen atom into a substrate, and reducing the second into a water molecule, with two electrons provided by NADPH via cytochrome P450 reductase (CPR; NADPH-ferrihemoprotein reductase). Participates in the conversion of arachidonic acid to omega-hydroxyeicosatetraenoic acid (20-HETE), a signaling molecule acting both as vasoconstrictive and natriuretic with overall effect on arterial blood pressure. May play a role in the oxidative inactivation of eicosanoids, including both pro-inflammatory and anti-inflammatory mediators such as leukotriene B4 (LTB4), lipoxin A4 (LXA4), and several HETEs. In Rattus norvegicus (Rat), this protein is Cytochrome P450 4F1.